Reading from the N-terminus, the 87-residue chain is Small ribosomal subunit protein uS15 (87 aa).

It belongs to the universal ribosomal protein uS15 family. As to quaternary structure, part of the 30S ribosomal subunit. Forms a bridge to the 50S subunit in the 70S ribosome, contacting the 23S rRNA.

In terms of biological role, one of the primary rRNA binding proteins, it binds directly to 16S rRNA where it helps nucleate assembly of the platform of the 30S subunit by binding and bridging several RNA helices of the 16S rRNA. Forms an intersubunit bridge (bridge B4) with the 23S rRNA of the 50S subunit in the ribosome. This chain is Small ribosomal subunit protein uS15, found in Pseudothermotoga lettingae (strain ATCC BAA-301 / DSM 14385 / NBRC 107922 / TMO) (Thermotoga lettingae).